Reading from the N-terminus, the 136-residue chain is UPF0310 protein SMU_442 (136 aa).

It belongs to the UPF0310 family.

This is UPF0310 protein SMU_442 from Streptococcus mutans serotype c (strain ATCC 700610 / UA159).